A 1170-amino-acid polypeptide reads, in one-letter code: MLWPLLLLALWAWPSAQAGDQDEDTAFDLFSISNINRKTIGAKQFRGPDPSVPAYRFVRFDYIPPVSAEHLGRITEAMRRKEGFFLTASMKQDRRSRGTLLALEGPGATHRQFEIVSNGPADTLDLTYWVDGTQHVISLEDVGLADSQWKNVTVQVTGETYSLYVGCDLMDSFALDEPFYEHLQTERSRMYVTKGAARESHFRGLLQNVYLVFENSVEDLLSKKGCQQSQGAETNAISENTETLHLSPMVTMEHVGPSAEKSPEVCEHSCEELGSMIRELSGLHVIVNQLHENLRKVSNDNQFLWELIGGPPKTRNVSACWQDGRFFAENETWVVDSCTKCTCKKFKTVCHQISCPPATCADPWFVEGECCPSCVHDGEEGWSPWAEWTECSATCGSGTQQRGRSCDVTSNTCLGPSIQTRACSLGRCDHRIRQDGGWSHWSPWSSCSVTCGVGNVTRIRLCNSPVPQMGGRSCKGSGRETKACQGPPCPVDGRWSPWSPWSACTVTCAGGIRERTRVCNSPEPQHGGKDCVGGAKEQQMCNRKSCPIDGCLSNPCFPGAECSSFPDGSWSCGSCPGGFLGNGTHCEDLDECAVVTDVCFATSKAHRCVNTNPGYHCLPCPPRYKGNQPFGVGLEAARTEKQVCEPENPCKDKTHSCHRHAECIYLGHFSDPMYKCECQTGYAGDGLICGEDSDLDGWPNKNLVCATNATYHCVKDNCPLLPNSGQEDFDKDGIGDACDDDDDNDGVSDEKDNCQLLFNPRQFDYDKDEVGDRCDNCPYVHNPAQIDTDNNGEGDACSVDIDGDDVFNERDNCPYVYNTDQRDTDGDGVGDHCDNCPLVHNPDQTDVDNDLVGDQCDNNEDIDEDGHQNNQDNCPHIPNANQADHDRDGQGDACDSDDDNDGIPDDRDNCRLVANPDQEDSDGDRRGDACKDDFDNDSIPDIDDVCPENNAISETDFRNFQMVHLDPKGTTQIDPNWVIRHQGKELVQTANSDPGIAVGFDEFGSVDFSGTFYVNTDRDDDYAGFVFGYQSSSRFYVVMWKQVTQTYWEDQPTRAYGYSGVSLKVVNSTTGTGEHLRNALWHTGNTEGQVRTLWHDPKNIGWKDYTAYRWHLTHRPKTGYIRVLVHEGKQVMADSGPIYDQTYAGGRLGLFVFSQEMVYFSDLKYECRDV.

The first 18 residues, Met-1 to Ala-18, serve as a signal peptide directing secretion. A Laminin G-like domain is found at Gly-19–Asn-215. Residues Gly-19–Ala-232 are heparin-binding. N-linked (GlcNAc...) asparagine glycosylation is found at Asn-151, Asn-316, and Asn-330. One can recognise a VWFC domain in the interval Ser-318–Val-375. TSP type-1 domains follow at residues Glu-379–Asp-429, Asp-435–Pro-490, and Asp-492–Pro-547. 26 disulfide bridges follow: Cys-391-Cys-423, Cys-395-Cys-428, Cys-406-Cys-413, Cys-447-Cys-484, Cys-451-Cys-489, Cys-462-Cys-474, Cys-504-Cys-541, Cys-508-Cys-546, Cys-519-Cys-531, Cys-551-Cys-562, Cys-556-Cys-572, Cys-575-Cys-586, Cys-592-Cys-608, Cys-599-Cys-617, Cys-620-Cys-644, Cys-650-Cys-663, Cys-657-Cys-676, Cys-678-Cys-689, Cys-705-Cys-713, Cys-718-Cys-738, Cys-754-Cys-774, Cys-777-Cys-797, Cys-813-Cys-833, Cys-836-Cys-856, Cys-874-Cys-894, and Cys-910-Cys-930. An N-linked (GlcNAc...) asparagine glycan is attached at Asn-455. Positions Pro-547–Glu-587 constitute an EGF-like 1 domain. An N-linked (GlcNAc...) asparagine glycan is attached at Asn-582. In terms of domain architecture, EGF-like 2 spans Pro-646–Gly-690. 8 TSP type-3 repeats span residues Glu-691 to Gln-726, Glu-727 to Gln-762, Phe-763 to Gln-785, Ile-786 to Gln-821, Arg-822 to Gln-844, Thr-845 to Gln-882, Ala-883 to Gln-918, and Glu-919 to Glu-954. Asn-708 carries N-linked (GlcNAc...) asparagine glycosylation. The tract at residues Lys-731–Glu-750 is disordered. The segment covering Ala-737–Val-747 has biased composition (acidic residues). A disordered region spans residues Asn-841 to Asp-944. Composition is skewed to acidic residues over residues Thr-845 to Glu-864 and Cys-894 to Ile-903. The span at Gly-923–Asp-933 shows a compositional bias: basic and acidic residues. The Cell attachment site signature appears at Arg-926 to Asp-928. Residues Phe-934–Asp-944 are compositionally biased toward acidic residues. Residues Asn-936 and Asn-1067 are each glycosylated (N-linked (GlcNAc...) asparagine). Cys-946 and Cys-1167 are oxidised to a cystine. The TSP C-terminal domain maps to Arg-958–Val-1170.

The protein belongs to the thrombospondin family. Homotrimer; disulfide-linked. Can bind to fibrinogen, fibronectin, laminin and type V collagen. Interacts (via the TSP type I repeats) with CD36; the interaction conveys an antiangiogenic effect. Interacts (via the TSP type I repeats) with HRG; the interaction blocks the antiangiogenic effect of THBS2 with CD36.

Adhesive glycoprotein that mediates cell-to-cell and cell-to-matrix interactions. Ligand for CD36 mediating antiangiogenic properties. This is Thrombospondin-2 (THBS2) from Bos taurus (Bovine).